Consider the following 543-residue polypeptide: Kelch repeat and BTB domain-containing protein 4 (543 aa).

Residues 70–137 (ADVTISVEGR…IYHGTVKLRA (68 aa)) enclose the BTB domain. The 93-residue stretch at 172–264 (CLQVMWLADR…SLKEIGENVH (93 aa)) folds into the BACK domain. Kelch repeat units lie at residues 264-310 (HIYL…KHGG), 311-353 (DLYV…SVPG), 356-403 (AIYS…NLNG), 405-455 (IYLL…VHKD), and 457-505 (VFIV…YVFR).

Component of the BCR(KBTBD4) E3 ubiquitin ligase complex, at least composed of CUL3, KBTBD4 and RBX1.

Its function is as follows. Substrate-specific adapter of a BCR (BTB-CUL3-RBX1) E3 ubiquitin ligase complex which targets CoREST corepressor complex components RCOR1, KDM1A/LSD1 and HDAC2 for proteasomal degradation. RCOR1 is likely to be the primary target while degradation of KDM1A and HDAC2 is likely due to their association with RCOR1. Also targets RCOR3, MIER2 and MIER3 for proteasomal degradation as well as associated proteins ZNF217 and RREB1. Degradation is dependent on the presence of an ELM2 domain in the target proteins. This chain is Kelch repeat and BTB domain-containing protein 4 (KBTBD4), found in Macaca fascicularis (Crab-eating macaque).